A 281-amino-acid polypeptide reads, in one-letter code: MNSNIEKSDKPSFIKISEQPSLYDDLEKKSVREILEDINKEDQKVAIAVQKAIPQIEKLVTQIVPRMKQGGRIFYMGAGTSGRLGVLDASEIPPTFGMPPTLIIGLIAGGDTALRNPVENAEDNTIRGWEELTEHNINDKDTVIGIAASGTTPYVIGAMHAAREHGILTGCITSNPNSPMAAEADIPIEMIVGPEYVTGSSRMKSGTGQKMILNMITTSVMIQLGRVKGNKMVNMQLSNRKLVDRGTRMIIEELGLEYDKAKALLLMHGSVKKAIDAYKAG.

An SIS domain is found at 63 to 226; the sequence is IVPRMKQGGR…TTSVMIQLGR (164 aa). E91 acts as the Proton donor in catalysis. E122 is an active-site residue.

It belongs to the GCKR-like family. MurNAc-6-P etherase subfamily. Homodimer.

It catalyses the reaction N-acetyl-D-muramate 6-phosphate + H2O = N-acetyl-D-glucosamine 6-phosphate + (R)-lactate. The protein operates within amino-sugar metabolism; N-acetylmuramate degradation. Specifically catalyzes the cleavage of the D-lactyl ether substituent of MurNAc 6-phosphate, producing GlcNAc 6-phosphate and D-lactate. The protein is N-acetylmuramic acid 6-phosphate etherase of Bacteroides fragilis (strain YCH46).